Reading from the N-terminus, the 246-residue chain is tRNA pseudouridine synthase A (246 aa).

The active-site Nucleophile is the Asp53. Residue Tyr112 participates in substrate binding.

It belongs to the tRNA pseudouridine synthase TruA family. Homodimer.

It catalyses the reaction uridine(38/39/40) in tRNA = pseudouridine(38/39/40) in tRNA. Its function is as follows. Formation of pseudouridine at positions 38, 39 and 40 in the anticodon stem and loop of transfer RNAs. The polypeptide is tRNA pseudouridine synthase A (Anaplasma phagocytophilum (strain HZ)).